The following is a 319-amino-acid chain: Acyl-coenzyme A thioesterase 8 (319 aa).

The disordered stretch occupies residues 1 to 20 (MSSPQAPEDGQGCGDRGDPP). Catalysis depends on charge relay system residues Asp232, Ser254, and Gln304. The Microbody targeting signal signature appears at 317 to 319 (SKL).

The protein belongs to the C/M/P thioester hydrolase family. As to quaternary structure, homodimer. In terms of assembly, (Microbial infection) Interacts with human immunodeficiency virus (HIV-1) Nef (via middle region); this interaction enhances ACOT8 Acyl-CoA thioesterase activity and occurs in a Nef myristoylation-independent manner. According to a second report, the interaction with HIV-1 Nef occurs in a Nef myristoylation-independent manner but does not enhance ACOT8 Acyl-CoA thioesterase activity. Detected in a T-cell line (at protein level). Ubiquitous.

The protein localises to the peroxisome matrix. The enzyme catalyses choloyl-CoA + H2O = cholate + CoA + H(+). It carries out the reaction chenodeoxycholoyl-CoA + H2O = chenodeoxycholate + CoA + H(+). It catalyses the reaction acetyl-CoA + H2O = acetate + CoA + H(+). The catalysed reaction is butanoyl-CoA + H2O = butanoate + CoA + H(+). The enzyme catalyses 2-methylpropanoyl-CoA + H2O = 2-methylpropanoate + CoA + H(+). It carries out the reaction hexanoyl-CoA + H2O = hexanoate + CoA + H(+). It catalyses the reaction octanoyl-CoA + H2O = octanoate + CoA + H(+). The catalysed reaction is decanoyl-CoA + H2O = decanoate + CoA + H(+). The enzyme catalyses dodecanoyl-CoA + H2O = dodecanoate + CoA + H(+). It carries out the reaction tetradecanoyl-CoA + H2O = tetradecanoate + CoA + H(+). It catalyses the reaction hexadecanoyl-CoA + H2O = hexadecanoate + CoA + H(+). The catalysed reaction is octadecanoyl-CoA + H2O = octadecanoate + CoA + H(+). The enzyme catalyses malonyl-CoA + H2O = malonate + CoA + H(+). It carries out the reaction acetoacetyl-CoA + H2O = acetoacetate + CoA + H(+). It catalyses the reaction propanoyl-CoA + H2O = propanoate + CoA + H(+). The catalysed reaction is succinyl-CoA + H2O = succinate + CoA + H(+). The enzyme catalyses glutaryl-CoA + H2O = glutarate + CoA + H(+). It carries out the reaction hexanedioyl-CoA + H2O = hexanedioate + CoA + H(+). It catalyses the reaction octanedioyl-CoA + H2O = octanedioate + CoA + H(+). The catalysed reaction is decanedioyl-CoA + H2O = decanedioate + CoA + H(+). The enzyme catalyses dodecanedioyl-CoA + H2O = dodecanedioate + CoA + H(+). It carries out the reaction (9Z)-tetradecenoyl-CoA + H2O = (9Z)-tetradecenoate + CoA + H(+). It catalyses the reaction (9Z)-hexadecenoyl-CoA + H2O = (9Z)-hexadecenoate + CoA + H(+). The catalysed reaction is (9Z)-octadecenoyl-CoA + H2O = (9Z)-octadecenoate + CoA + H(+). The enzyme catalyses (9Z,12Z)-octadecadienoyl-CoA + H2O = (9Z,12Z)-octadecadienoate + CoA + H(+). It carries out the reaction eicosanoyl-CoA + H2O = eicosanoate + CoA + H(+). It catalyses the reaction (5Z,8Z,11Z,14Z)-eicosatetraenoyl-CoA + H2O = (5Z,8Z,11Z,14Z)-eicosatetraenoate + CoA + H(+). The catalysed reaction is 4,8-dimethylnonanoyl-CoA + H2O = 4,8-dimethylnonanoate + CoA + H(+). The enzyme catalyses 2,6-dimethylheptanoyl-CoA + H2O = 2,6-dimethylheptanoate + CoA + H(+). It carries out the reaction (3S)-3-hydroxy-3-methylglutaryl-CoA + H2O = 3-hydroxy-3-methylglutarate + CoA + H(+). It catalyses the reaction 3alpha,7alpha,12alpha-trihydroxy-5beta-cholestan-26-oyl-CoA + H2O = 3alpha,7alpha,12alpha-trihydroxy-5beta-cholestan-26-oate + CoA + H(+). The catalysed reaction is 2-methyloctadecanoyl-CoA + H2O = 2-methyloctadecanoate + CoA + H(+). The enzyme catalyses prostaglandin F2alpha-CoA + H2O = prostaglandin F2alpha + CoA + H(+). The protein operates within lipid metabolism; fatty acid metabolism. Its activity is regulated as follows. Inhibited by CoASH (IC(50)=10-15 uM). Also inhibited by cysteine-reactive agents. Catalyzes the hydrolysis of acyl-CoAs into free fatty acids and coenzyme A (CoASH), regulating their respective intracellular levels. Displays no strong substrate specificity with respect to the carboxylic acid moiety of Acyl-CoAs. Hydrolyzes medium length (C2 to C20) straight-chain, saturated and unsaturated acyl-CoAS but is inactive towards substrates with longer aliphatic chains. Moreover, it catalyzes the hydrolysis of CoA esters of bile acids, such as choloyl-CoA and chenodeoxycholoyl-CoA and competes with bile acid CoA:amino acid N-acyltransferase (BAAT). Is also able to hydrolyze CoA esters of dicarboxylic acids. It is involved in the metabolic regulation of peroxisome proliferation. Functionally, (Microbial infection) May mediate Nef-induced down-regulation of CD4 cell-surface expression. This is Acyl-coenzyme A thioesterase 8 (ACOT8) from Homo sapiens (Human).